The sequence spans 118 residues: Large ribosomal subunit protein bL20 (118 aa).

Belongs to the bacterial ribosomal protein bL20 family.

Binds directly to 23S ribosomal RNA and is necessary for the in vitro assembly process of the 50S ribosomal subunit. It is not involved in the protein synthesizing functions of that subunit. The polypeptide is Large ribosomal subunit protein bL20 (Pseudomonas fluorescens (strain ATCC BAA-477 / NRRL B-23932 / Pf-5)).